Reading from the N-terminus, the 39-residue chain is Photosystem II reaction center protein L (39 aa).

Residues 18 to 38 (SLYLGLLLVFVTGVLFSSYFF) traverse the membrane as a helical segment.

Belongs to the PsbL family. PSII is composed of 1 copy each of membrane proteins PsbA, PsbB, PsbC, PsbD, PsbE, PsbF, PsbH, PsbI, PsbJ, PsbK, PsbL, PsbM, PsbT, PsbX, PsbY, PsbZ, Psb30/Ycf12, at least 3 peripheral proteins of the oxygen-evolving complex and a large number of cofactors. It forms dimeric complexes.

It localises to the plastid. Its subcellular location is the organellar chromatophore thylakoid membrane. Functionally, one of the components of the core complex of photosystem II (PSII). PSII is a light-driven water:plastoquinone oxidoreductase that uses light energy to abstract electrons from H(2)O, generating O(2) and a proton gradient subsequently used for ATP formation. It consists of a core antenna complex that captures photons, and an electron transfer chain that converts photonic excitation into a charge separation. This subunit is found at the monomer-monomer interface and is required for correct PSII assembly and/or dimerization. This chain is Photosystem II reaction center protein L, found in Paulinella chromatophora.